The sequence spans 125 residues: Protein ApaG (125 aa).

An ApaG domain is found at 1-125 (MINAPRVCVQ…FRLAIPSLIH (125 aa)).

In Pectobacterium atrosepticum (strain SCRI 1043 / ATCC BAA-672) (Erwinia carotovora subsp. atroseptica), this protein is Protein ApaG.